Here is an 87-residue protein sequence, read N- to C-terminus: Large ribosomal subunit protein bL27 (87 aa).

The disordered stretch occupies residues 1–21 (MAHKKAGGSSRNGRDSESKRL).

It belongs to the bacterial ribosomal protein bL27 family.

This Burkholderia ambifaria (strain MC40-6) protein is Large ribosomal subunit protein bL27.